Consider the following 672-residue polypeptide: Glycine--tRNA ligase beta subunit (672 aa).

Belongs to the class-II aminoacyl-tRNA synthetase family. As to quaternary structure, tetramer of two alpha and two beta subunits.

Its subcellular location is the cytoplasm. It catalyses the reaction tRNA(Gly) + glycine + ATP = glycyl-tRNA(Gly) + AMP + diphosphate. The protein is Glycine--tRNA ligase beta subunit of Thermotoga petrophila (strain ATCC BAA-488 / DSM 13995 / JCM 10881 / RKU-1).